The primary structure comprises 68 residues: Metallothionein (68 aa).

It belongs to the metallothionein superfamily. Type 4 family.

Functionally, metallothioneins have a high content of cysteine residues that bind various heavy metals. This chain is Metallothionein (MT1), found in Lytechinus pictus (Painted sea urchin).